The chain runs to 524 residues: Keratin, type II cytoskeletal 71 (524 aa).

The interval 1–130 (MNRQFTCKSG…DPEIQKVRAQ (130 aa)) is head. The interval 131–166 (EREQIKALNNKFASFIDKVRFLEQQNQVLETKWELL) is coil 1A. One can recognise an IF rod domain in the interval 131–444 (EREQIKALNN…KLLESEECRM (314 aa)). The tract at residues 167–185 (QQLDLNNCKNNLEPILEGY) is linker 1. Positions 186 to 277 (ISNLRKQLET…CLYEAEIAQI (92 aa)) are coil 1B. The linker 12 stretch occupies residues 278 to 301 (QSHISDMSVILSMDNNRDLNLDSI). Residues 302–440 (IDEVRAQYEE…ATYRKLLESE (139 aa)) are coil 2. The interval 441–524 (ECRMSGEFPS…QSASSKKASR (84 aa)) is tail. A disordered region spans residues 491–524 (VRGGEGRSRGSTSDYKDTLGKGSSQSASSKKASR). Residues 494–509 (GEGRSRGSTSDYKDTL) are compositionally biased toward basic and acidic residues. Low complexity predominate over residues 510–524 (GKGSSQSASSKKASR).

This sequence belongs to the intermediate filament family. Heterodimer of a type I and a type II keratin. Associates with KRT16 and/or KRT17.

It localises to the cytoplasm. The protein resides in the cytoskeleton. Functionally, plays a central role in hair formation. Essential component of keratin intermediate filaments in the inner root sheath (IRS) of the hair follicle. The chain is Keratin, type II cytoskeletal 71 (KRT71) from Felis catus (Cat).